The primary structure comprises 1441 residues: Probable cleavage and polyadenylation specificity factor subunit 1 (1441 aa).

The protein belongs to the CPSF1 family. As to quaternary structure, CPSF is a heterotetramer composed of four distinct subunits 160, 100, 70 and 30 kDa.

The protein resides in the nucleus. CPSF plays a key role in pre-mRNA 3'-end formation, recognizing the AAUAAA signal sequence and interacting with poly(A)polymerase and other factors to bring about cleavage and poly(A) addition. This subunit is involved in the RNA recognition step of the polyadenylation reaction. The chain is Probable cleavage and polyadenylation specificity factor subunit 1 from Oryza sativa subsp. japonica (Rice).